Consider the following 271-residue polypeptide: MFSIQQPLLVFSDLDGTLLDSHSYDWQPAAPWLTRLREANVPVILCSSKTSAEMLYLQKTLGLQGLPLIAENGAVIQLAEQWQEIDGFPRIISGISHGEISLVLNTLREKEHFKFTTFDDVDDATIAEWTGLSRSQAALTQLHEASVTLIWRDSDERMAQFTARLNELGLQFMQGARFWHVLDASAGKDQAANWIIATYQQLSGKRPTTLGLGDGPNDAPLLEVMDYAVIVKGLNREGVHLHDEDPARVWRTQREGPEGWREGLDHFFSAR.

Catalysis depends on aspartate 13, which acts as the Nucleophile. Residues aspartate 13, aspartate 15, and aspartate 214 each contribute to the Mg(2+) site.

Belongs to the HAD-like hydrolase superfamily. MPGP family. Requires Mg(2+) as cofactor.

The protein resides in the cytoplasm. The enzyme catalyses 2-O-(alpha-D-mannosyl)-3-phosphoglycerate + H2O = (2R)-2-O-(alpha-D-mannosyl)-glycerate + phosphate. This chain is Mannosyl-3-phosphoglycerate phosphatase, found in Escherichia coli (strain K12 / DH10B).